The following is a 347-amino-acid chain: MSFVLSRMAACGGTCKNKVTVSKPVWDFLSKETPARLARLREEHRVSILIDGETSDIYVLQLSPQGPPPAPPNGLYLARKALKGLLKEAEKELKKAQRQGELMGCLALGGGGEHPEMHRAGPPPLRAAPLLPPGARGLPPPPPPLPPPLPPRLREEAEEQESTCPICLGEIQNAKTLEKCRHSFCEGCITRALQVKKACPMCGRFYGQLVGNQPQNGRMLVSKDATLLLPSYEKYGTIVIQYVFPPGVQGAEHPNPGVRYPGTTRVAYLPDCPEGNKVLTLFRKAFDQRLTFTIGTSMTTGRPNVITWNDIHHKTSCTGGPQLFGYPDPTYLTRVQEELRAKGITDD.

Residues 113-157 (EHPEMHRAGPPPLRAAPLLPPGARGLPPPPPPLPPPLPPRLREEA) form a disordered region. A compositionally biased stretch (pro residues) spans 121 to 151 (GPPPLRAAPLLPPGARGLPPPPPPLPPPLPP). The RING-type zinc-finger motif lies at 164–205 (CPICLGEIQNAKTLEKCRHSFCEGCITRALQVKKACPMCGRF).

Belongs to the Deltex family. As to quaternary structure, homodimer. May form a heterodimers with other members of the Deltex family. Interacts with NOTCH1.

Its subcellular location is the cytoplasm. It catalyses the reaction S-ubiquitinyl-[E2 ubiquitin-conjugating enzyme]-L-cysteine + [acceptor protein]-L-lysine = [E2 ubiquitin-conjugating enzyme]-L-cysteine + N(6)-ubiquitinyl-[acceptor protein]-L-lysine.. It functions in the pathway protein modification; protein ubiquitination. Regulator of Notch signaling, a signaling pathway involved in cell-cell communications that regulates a broad spectrum of cell-fate determinations. Probably acts both as a positive and negative regulator of Notch, depending on the developmental and cell context. Functions as an ubiquitin ligase protein in vitro, suggesting that it may regulate the Notch pathway via some ubiquitin ligase activity. This is Probable E3 ubiquitin-protein ligase DTX3 (DTX3) from Homo sapiens (Human).